The sequence spans 191 residues: Small ribosomal subunit protein uS5 (191 aa).

The S5 DRBM domain maps to 21–84 (LVDKLVTINR…ERAKRTMIRV (64 aa)). A disordered region spans residues 161–191 (PRHVASRRGKKAAELFGKREQGQTEAEVTNG). Residues 171–182 (KAAELFGKREQG) are compositionally biased toward basic and acidic residues.

It belongs to the universal ribosomal protein uS5 family. In terms of assembly, part of the 30S ribosomal subunit. Contacts proteins S4 and S8.

Functionally, with S4 and S12 plays an important role in translational accuracy. In terms of biological role, located at the back of the 30S subunit body where it stabilizes the conformation of the head with respect to the body. The sequence is that of Small ribosomal subunit protein uS5 from Gluconobacter oxydans (strain 621H) (Gluconobacter suboxydans).